The following is a 376-amino-acid chain: 1-acyl-sn-glycerol-3-phosphate acyltransferase gamma (376 aa).

Over 1–124 (MGLLAFLKTQ…LGSSKVLAKK (124 aa)) the chain is Cytoplasmic. An HXXXXD motif motif is present at residues 96–101 (HNFEID). The chain crosses the membrane as a helical span at residues 125–145 (ELLYVPLIGWTWYFLEIVFCK). The Lumenal portion of the chain corresponds to 146-316 (RKWEEDRDTV…TLLNFLSWAT (171 aa)). A helical membrane pass occupies residues 317–339 (ILLSPLFSFVLGVFASGSPLLIL). Residues 340–376 (TFLGFVGAASFGVRRLIGVTEIEKGSSYGNQEFKKKE) lie on the Cytoplasmic side of the membrane.

It belongs to the 1-acyl-sn-glycerol-3-phosphate acyltransferase family. In terms of tissue distribution, widely expressed with highest levels in testis, pancreas and kidney, followed by spleen, lung, adipose tissue and liver.

The protein resides in the endoplasmic reticulum membrane. It localises to the nucleus envelope. The enzyme catalyses a 1-acyl-sn-glycero-3-phosphate + an acyl-CoA = a 1,2-diacyl-sn-glycero-3-phosphate + CoA. It carries out the reaction pentadecanoyl-CoA + 1-(9Z-octadecenoyl)-sn-glycero-3-phosphate = 1-(9Z)-octadecenoyl-2-pentadecanoyl-sn-glycero-3-phosphate + CoA. It catalyses the reaction heptadecanoyl-CoA + 1-(9Z-octadecenoyl)-sn-glycero-3-phosphate = 1-(9Z)-octadecenoyl-2-heptadecanoyl-sn-glycero-3-phosphate + CoA. The catalysed reaction is 1-(9Z-octadecenoyl)-sn-glycero-3-phosphate + octadecanoyl-CoA = 1-(9Z-octadecenoyl)-2-octadecanoyl-sn-glycero-3-phosphate + CoA. The enzyme catalyses nonadecanoyl-CoA + 1-(9Z-octadecenoyl)-sn-glycero-3-phosphate = 1-(9Z)-octadecenoyl-2-nonadecanoyl-sn-glycero-3-phosphate + CoA. It carries out the reaction 1-(9Z-octadecenoyl)-sn-glycero-3-phosphate + (5Z,8Z,11Z,14Z)-eicosatetraenoyl-CoA = 1-(9Z)-octadecenoyl-2-(5Z,8Z,11Z,14Z)-eicosatetraenoyl-sn-glycero-3-phosphate + CoA. It catalyses the reaction 1-(9Z-octadecenoyl)-sn-glycero-3-phosphate + (9Z)-octadecenoyl-CoA = 1,2-di-(9Z-octadecenoyl)-sn-glycero-3-phosphate + CoA. The catalysed reaction is 1-(9Z-octadecenoyl)-sn-glycero-3-phosphate + (9Z,12Z)-octadecadienoyl-CoA = 1-(9Z)-octadecenoyl-2-(9Z,12Z)-octadecadienoyl-sn-glycero-3-phosphate + CoA. The enzyme catalyses 1-(9Z-octadecenoyl)-sn-glycero-3-phosphocholine + (5Z,8Z,11Z,14Z)-eicosatetraenoyl-CoA = 1-(9Z)-octadecenoyl-2-(5Z,8Z,11Z,14Z)-icosatetraenoyl-sn-glycero-3-phosphocholine + CoA. It carries out the reaction 1-(9Z-octadecenoyl)-sn-glycero-3-phospho-(1D-myo-inositol) + (5Z,8Z,11Z,14Z)-eicosatetraenoyl-CoA = 1-(9Z-octadecenoyl)-2-(5Z,8Z,11Z,14Z-eicosatetraenoyl)-sn-glycero-3-phospho-1D-myo-inositol + CoA. It catalyses the reaction 1-(9Z-octadecenoyl)-sn-glycero-3-phospho-L-serine + (5Z,8Z,11Z,14Z)-eicosatetraenoyl-CoA = 1-(9Z-octadecenoyl)-2-(5Z,8Z,11Z,14Z-eicosatetraenoyl)-sn-glycero-3-phospho-L-serine + CoA. The catalysed reaction is 1-hexadecanoyl-sn-glycero-3-phosphate + (9Z)-octadecenoyl-CoA = 1-hexadecanoyl-2-(9Z-octadecenoyl)-sn-glycero-3-phosphate + CoA. The enzyme catalyses 1-hexadecanoyl-sn-glycero-3-phosphate + (5Z,8Z,11Z,14Z)-eicosatetraenoyl-CoA = 1-hexadecanoyl-2-(5Z,8Z,11Z,14Z-eicosatetraenoyl)-sn-glycero-3-phosphate + CoA. It carries out the reaction 1-heptadecanoyl-sn-glycero-3-phosphate + (5Z,8Z,11Z,14Z)-eicosatetraenoyl-CoA = 1-heptadecanoyl-2-(5Z,8Z,11Z,14Z)-eicosatetraenoyl-sn-glycero-3-phosphate + CoA. It catalyses the reaction 1-octadecanoyl-sn-glycero-3-phosphate + (9Z)-octadecenoyl-CoA = 1-octadecanoyl-2-(9Z-octadecenoyl)-sn-glycero-3-phosphate + CoA. The catalysed reaction is 1-octadecanoyl-sn-glycero-3-phosphate + (5Z,8Z,11Z,14Z)-eicosatetraenoyl-CoA = 1-octadecanoyl-2-(5Z,8Z,11Z,14Z-eicosatetraenoyl)-sn-glycero-3-phosphate + CoA. The enzyme catalyses 1-(9Z-octadecenoyl)-sn-glycero-3-phosphate + hexadecanoyl-CoA = 1-hexadecanoyl-2-(9Z-octadecenoyl)-sn-glycero-3-phosphate + CoA. It carries out the reaction 1-O-(9Z-octadecenyl)-sn-glycero-3-phosphate + (5Z,8Z,11Z,14Z)-eicosatetraenoyl-CoA = 1-O-(9Z-octadecenyl)-2-(5Z,8Z,11Z,14Z-eicosatetraenoyl)-sn-glycero-3-phosphate + CoA. It catalyses the reaction a 1-acyl-sn-glycero-3-phospho-(1D-myo-inositol) + (5Z,8Z,11Z,14Z)-eicosatetraenoyl-CoA = a 1-acyl-2-(5Z,8Z,11Z,14Z-eicosatetraenoyl)-sn-glycero-3-phospho-(1D-myo-inositol) + CoA. It participates in phospholipid metabolism; CDP-diacylglycerol biosynthesis; CDP-diacylglycerol from sn-glycerol 3-phosphate: step 2/3. Functionally, converts 1-acyl-sn-glycerol-3-phosphate (lysophosphatidic acid or LPA) into 1,2-diacyl-sn-glycerol-3-phosphate (phosphatidic acid or PA) by incorporating an acyl moiety at the sn-2 position of the glycerol backbone. Acts on LPA containing saturated or unsaturated fatty acids C16:0-C20:4 at the sn-1 position using C18:1, C20:4 or C18:2-CoA as the acyl donor. Also acts on lysophosphatidylcholine, lysophosphatidylinositol and lysophosphatidylserine using C18:1 or C20:4-CoA. Has a preference for arachidonoyl-CoA as a donor. Also has a modest lysophosphatidylinositol acyltransferase (LPIAT) activity, converts lysophosphatidylinositol (LPI) into phosphatidylinositol. The chain is 1-acyl-sn-glycerol-3-phosphate acyltransferase gamma (AGPAT3) from Homo sapiens (Human).